The chain runs to 437 residues: Na(+)/H(+) antiporter NhaA (437 aa).

A run of 11 helical transmembrane segments spans residues 12–32 (SMNITASILLFVTAIAAAVIA), 65–85 (LTMIEFINDGLMTIFFLMVGL), 103–123 (ALPFIAACGGMVVPVVIYSMV), 133–153 (GLAIPMATDIAFSLGVLSLLG), 162–182 (IFLTAFAVVDDIGGILVIAIF), 186–206 (HVAYEYLLWAALLYVLLYFIG), 214–234 (IFFLVVGVVIWYLFLQSGIHS), 308–328 (GAVNYLVLPLFAFVNAGVMFS), 333–353 (VIGGVTLAVALGLLAGKFLGI), 377–397 (ISGVALLGGIGFTVSLFIANL), and 412–432 (LGVLSGTVMAGILGYLVLHWV).

The protein belongs to the NhaA Na(+)/H(+) (TC 2.A.33) antiporter family.

It is found in the cell inner membrane. The enzyme catalyses Na(+)(in) + 2 H(+)(out) = Na(+)(out) + 2 H(+)(in). Functionally, na(+)/H(+) antiporter that extrudes sodium in exchange for external protons. This Bacteroides fragilis (strain ATCC 25285 / DSM 2151 / CCUG 4856 / JCM 11019 / LMG 10263 / NCTC 9343 / Onslow / VPI 2553 / EN-2) protein is Na(+)/H(+) antiporter NhaA.